The chain runs to 144 residues: Large ribosomal subunit protein uL11 (144 aa).

It belongs to the universal ribosomal protein uL11 family. As to quaternary structure, part of the ribosomal stalk of the 50S ribosomal subunit. Interacts with L10 and the large rRNA to form the base of the stalk. L10 forms an elongated spine to which L12 dimers bind in a sequential fashion forming a multimeric L10(L12)X complex. Post-translationally, one or more lysine residues are methylated.

Functionally, forms part of the ribosomal stalk which helps the ribosome interact with GTP-bound translation factors. The sequence is that of Large ribosomal subunit protein uL11 from Rickettsia bellii (strain OSU 85-389).